We begin with the raw amino-acid sequence, 278 residues long: HTH-type transcriptional activator RhaS (278 aa).

Positions 174 to 272 constitute an HTH araC/xylS-type domain; sequence NLLLAWLEDH…NWSPRDIRQG (99 aa). 2 DNA-binding regions (H-T-H motif) span residues 191–212 and 239–262; these read DAVA…KQQT and VTDI…RREF.

As to quaternary structure, binds DNA as a dimer.

It is found in the cytoplasm. Activates expression of the rhaBAD and rhaT operons. The chain is HTH-type transcriptional activator RhaS from Shigella flexneri serotype 5b (strain 8401).